We begin with the raw amino-acid sequence, 140 residues long: Ribonuclease P protein subunit p20 (140 aa).

Belongs to the histone-like Alba family. As to quaternary structure, component of nuclear RNase P and RNase MRP complexes. RNase P consists of a catalytic RNA moiety and 10 different protein chains; POP1, POP4, POP5, POP7, RPP14, RPP21, RPP25, RPP30, RPP38 and RPP40. Within the RNase P complex, POP1, POP7 and RPP25 form the 'finger' subcomplex, POP5, RPP14, RPP40 and homodimeric RPP30 form the 'palm' subcomplex, and RPP21, POP4 and RPP38 form the 'wrist' subcomplex. All subunits of the RNase P complex interact with the catalytic RNA. Several subunits of RNase P are also part of the RNase MRP complex. RNase MRP consists of a catalytic RNA moiety and about 8 protein subunits; POP1, POP7, RPP25, RPP30, RPP38, RPP40 and possibly also POP4 and POP5. Interacts with SMN1. POP7 forms a heterodimer with RPP25 that binds to the P3 stem loop of the catalytic RNA.

It localises to the nucleus. The protein localises to the nucleolus. It is found in the cytoplasm. Its subcellular location is the cytoplasmic granule. Its function is as follows. Component of ribonuclease P, a ribonucleoprotein complex that generates mature tRNA molecules by cleaving their 5'-ends. Also a component of the MRP ribonuclease complex, which cleaves pre-rRNA sequences. This chain is Ribonuclease P protein subunit p20 (POP7), found in Homo sapiens (Human).